Consider the following 577-residue polypeptide: Phosphoethanolamine transferase EptC (577 aa).

The next 5 membrane-spanning stretches (helical) occupy residues 17–37 (LGWA…IIYI), 44–64 (NGIR…FLFP), 69–89 (IIAA…LCYY), 119–139 (YFSL…VLLW), and 154–174 (VVSF…NTFI).

This sequence belongs to the phosphoethanolamine transferase family. EptC/CptA subfamily.

The protein localises to the cell inner membrane. Its pathway is bacterial outer membrane biogenesis; LPS core biosynthesis. In terms of biological role, catalyzes the addition of a phosphoethanolamine moiety to the outer membrane lipopolysaccharide core. Plays a role in the pathogenesis of E.coli meningitis. Required for invasion of E.coli K1 into brain microvascular endothelial cells (BMEC). Contributes to E.coli traversal across the blood-brain barrier. The sequence is that of Phosphoethanolamine transferase EptC (eptC) from Escherichia coli O18:K1:H7 (strain RS218 / NMEC).